Consider the following 244-residue polypeptide: ATP synthase subunit a, chloroplastic (244 aa).

5 helical membrane passes run 35–55 (QVLITSWVVIAILLGSAVIAV), 92–112 (VPFIGTMFLFIFVSNWSGALL), 131–151 (INTTVALALLTSVAYFYAGLS), 196–216 (LVVVVLVSLVPSVVPIPVMFL), and 217–237 (GLFTSGIQALIFATLAAAYIG).

The protein belongs to the ATPase A chain family. F-type ATPases have 2 components, CF(1) - the catalytic core - and CF(0) - the membrane proton channel. CF(1) has five subunits: alpha(3), beta(3), gamma(1), delta(1), epsilon(1). CF(0) has four main subunits: a, b, b' and c.

It localises to the plastid. The protein localises to the chloroplast thylakoid membrane. Functionally, key component of the proton channel; it plays a direct role in the translocation of protons across the membrane. The chain is ATP synthase subunit a, chloroplastic from Gossypium hirsutum (Upland cotton).